Here is a 188-residue protein sequence, read N- to C-terminus: Ribosome-recycling factor (188 aa).

Belongs to the RRF family.

The protein resides in the cytoplasm. Its function is as follows. Responsible for the release of ribosomes from messenger RNA at the termination of protein biosynthesis. May increase the efficiency of translation by recycling ribosomes from one round of translation to another. This chain is Ribosome-recycling factor, found in Caulobacter sp. (strain K31).